A 155-amino-acid polypeptide reads, in one-letter code: Fibroblast growth factor 2 (155 aa).

Positions 1-9 are excised as a propeptide; it reads MAAGSITTL. Residues 1–20 form a disordered region; that stretch reads MAAGSITTLPALPEDGGSSA. A heparin-binding site is contributed by asparagine 36. The short motif at 46 to 48 is the Cell attachment site; atypical element; it reads DGR. The residue at position 82 (tyrosine 82) is a Phosphotyrosine; by TEC. The Cell attachment site; atypical motif lies at 88 to 90; sequence DGR. Residue lysine 95 forms a Glycyl lysine isopeptide (Lys-Gly) (interchain with G-Cter in SUMO1) linkage. Residues 128–144 are heparin-binding; the sequence is KRTGQYKLGPKTGPGQK.

Belongs to the heparin-binding growth factors family. In terms of assembly, monomer. Homodimer. Interacts with FGFR1, FGFR2, FGFR3 and FGFR4. Affinity between fibroblast growth factors (FGFs) and their receptors is increased by heparan sulfate glycosaminoglycans that function as coreceptors. Interacts with CSPG4, FGFBP1 and TEC. Found in a complex with FGFBP1, FGF1 and FGF2. Interacts with FGFBP3. Interacts with integrin ITGAV:ITGB3; the interaction is required for FGF2 signaling. Interacts with SNORC (via the extracellular domain). Interacts with glypican GPC3. Post-translationally, phosphorylation at Tyr-82 regulates FGF2 unconventional secretion.

The protein resides in the secreted. Its subcellular location is the nucleus. Its function is as follows. Acts as a ligand for FGFR1, FGFR2, FGFR3 and FGFR4. Also acts as an integrin ligand which is required for FGF2 signaling. Binds to integrin ITGAV:ITGB3. Plays an important role in the regulation of cell survival, cell division, cell differentiation and cell migration. Functions as a potent mitogen in vitro. Can induce angiogenesis. Mediates phosphorylation of ERK1/2 and thereby promotes retinal lens fiber differentiation. In Ovis aries (Sheep), this protein is Fibroblast growth factor 2 (FGF2).